A 604-amino-acid polypeptide reads, in one-letter code: Vacuolar protein sorting-associated protein 64 (604 aa).

The segment at 1-89 is disordered; sequence MVELEKRRRP…SVHQVSQQQQ (89 aa). Residues 1–578 lie on the Cytoplasmic side of the membrane; the sequence is MVELEKRRRP…LGVVEGKRTR (578 aa). Residues 22–34 show a composition bias toward polar residues; that stretch reads DQSNSQGMTKTPE. Low complexity-rich tracts occupy residues 44–57 and 77–89; these read RARS…SRSN and SPPS…QQQQ. The 73-residue stretch at 185-257 folds into the FHA domain; it reads LKLGRPVTNS…NGTFVNGVKI (73 aa). Positions 404–563 form a coiled coil; the sequence is NLINMIKTLT…EEKKDTEDTL (160 aa). A disordered region spans residues 539 to 561; sequence INNDNNAKVKQNDSREEKKDTED. Basic and acidic residues predominate over residues 548–560; it reads KQNDSREEKKDTE. The chain crosses the membrane as a helical; Anchor for type IV membrane protein span at residues 579 to 598; sequence VSKGMLFGVVAISFGLVATA. Over 599 to 604 the chain is Lumenal; that stretch reads VKQLPQ.

As to quaternary structure, component of a complex at least composed of FAR3, FAR7, FAR8, FAR10, FAR11 and VPS64.

It localises to the endoplasmic reticulum membrane. In terms of biological role, participates in the control of the reentry into the cell cycle following pheromone treatment. Involved in vacuolar protein sorting. The polypeptide is Vacuolar protein sorting-associated protein 64 (VPS64) (Saccharomyces cerevisiae (strain ATCC 204508 / S288c) (Baker's yeast)).